A 635-amino-acid polypeptide reads, in one-letter code: Extracellular metalloproteinase 1 (635 aa).

Residues 1 to 19 form the signal peptide; that stretch reads MHGLLLAAGLLSLPLHVLA. The propeptide occupies 20–246; it reads HPQPSTSTSL…VHNVVDYVAH (227 aa). Asn287 is a glycosylation site (N-linked (GlcNAc...) asparagine). His430 is a binding site for Zn(2+). Glu431 is a catalytic residue. His434 lines the Zn(2+) pocket. N-linked (GlcNAc...) asparagine glycans are attached at residues Asn475, Asn594, and Asn623.

Belongs to the peptidase M36 family. Zn(2+) is required as a cofactor.

Its subcellular location is the secreted. Its function is as follows. Secreted metalloproteinase probably acting as a virulence factor. The chain is Extracellular metalloproteinase 1 (MEP1) from Trichophyton tonsurans (Scalp ringworm fungus).